Reading from the N-terminus, the 1200-residue chain is Nuclear pore complex protein Nup133 (1200 aa).

The interval 1–28 is disordered; the sequence is MERNLQKQLYGISRESSPGARRYSMPAA.

Belongs to the nucleoporin Nup133 family. In terms of assembly, forms part of the Nup107-Nup160 subcomplex in the nuclear pore.

Its subcellular location is the nucleus. It is found in the nuclear pore complex. In terms of biological role, probable component of the nuclear pore complex (NPC). Plays a role in NPC assembly and/or maintenance. The protein is Nuclear pore complex protein Nup133 of Drosophila melanogaster (Fruit fly).